The chain runs to 605 residues: Elongation factor 4 (605 aa).

Residues 9 to 192 (SRTRNFCIIA…AIIARIPSPK (184 aa)) enclose the tr-type G domain. Residues 21–26 (DHGKST) and 139–142 (NKID) contribute to the GTP site.

It belongs to the TRAFAC class translation factor GTPase superfamily. Classic translation factor GTPase family. LepA subfamily.

It is found in the cell inner membrane. It catalyses the reaction GTP + H2O = GDP + phosphate + H(+). Functionally, required for accurate and efficient protein synthesis under certain stress conditions. May act as a fidelity factor of the translation reaction, by catalyzing a one-codon backward translocation of tRNAs on improperly translocated ribosomes. Back-translocation proceeds from a post-translocation (POST) complex to a pre-translocation (PRE) complex, thus giving elongation factor G a second chance to translocate the tRNAs correctly. Binds to ribosomes in a GTP-dependent manner. This is Elongation factor 4 from Chlorobium limicola (strain DSM 245 / NBRC 103803 / 6330).